The following is a 179-amino-acid chain: Transcription factor BOA15 (179 aa).

The protein localises to the nucleus. Transcription factor that probably coregulates the gene clusters that mediates the biosynthesis of botcinin acid and its botcinin derivatives, acetate-derived polyketides that contribute to virulence when combined with the sesquiterpene botrydial. Botcinin acid and its derivatives have been shown to induce chlorosis and necrosis during host plant infection, but also have antifungal activities. This is Transcription factor BOA15 from Botryotinia fuckeliana (strain B05.10) (Noble rot fungus).